The chain runs to 474 residues: PRAME family member 13 (474 aa).

The stretch at 97–124 (RRKLQVLDLRDVDENFWARWPGAWALSC) is one LRR 1; degenerate repeat. One copy of the LRR 2; degenerate repeat lies at 179–203 (HLCCSKLVNYLTPIKHLRKSLKIIY). One copy of the LRR 3; degenerate repeat lies at 204–230 (LNSIQELEIHNMSWPRLIRKLRCYLKE). The stretch at 231 to 265 (MKTLGKLVFSRCHHSTSDNELEGRLVTKFSSVFLG) is one LRR 4; degenerate repeat. 5 LRR repeats span residues 266 to 291 (LEHL…IRCL), 292 to 323 (QNPL…GYLK), 324 to 342 (HLNL…PLGA), 348 to 375 (AASL…GLSR), and 376 to 400 (CSQL…LLRH).

It belongs to the PRAME family.

This chain is PRAME family member 13, found in Homo sapiens (Human).